A 317-amino-acid polypeptide reads, in one-letter code: Phospho-N-acetylmuramoyl-pentapeptide-transferase (317 aa).

Helical transmembrane passes span 4 to 24 (LIYS…ILIP), 49 to 69 (TPTM…AVIV), 76 to 96 (AMIA…DDTL), 112 to 132 (MILL…NPYI), 147 to 167 (LGVF…NAVN), 186 to 206 (FLAL…CAIL), 223 to 243 (IFMG…VAMI), 246 to 266 (LPLL…SVIF), and 297 to 317 (RVVS…FLSL).

This sequence belongs to the glycosyltransferase 4 family. MraY subfamily. The cofactor is Mg(2+).

The protein localises to the cell membrane. The enzyme catalyses UDP-N-acetyl-alpha-D-muramoyl-L-alanyl-gamma-D-glutamyl-meso-2,6-diaminopimeloyl-D-alanyl-D-alanine + di-trans,octa-cis-undecaprenyl phosphate = di-trans,octa-cis-undecaprenyl diphospho-N-acetyl-alpha-D-muramoyl-L-alanyl-D-glutamyl-meso-2,6-diaminopimeloyl-D-alanyl-D-alanine + UMP. It functions in the pathway cell wall biogenesis; peptidoglycan biosynthesis. In terms of biological role, catalyzes the initial step of the lipid cycle reactions in the biosynthesis of the cell wall peptidoglycan: transfers peptidoglycan precursor phospho-MurNAc-pentapeptide from UDP-MurNAc-pentapeptide onto the lipid carrier undecaprenyl phosphate, yielding undecaprenyl-pyrophosphoryl-MurNAc-pentapeptide, known as lipid I. The sequence is that of Phospho-N-acetylmuramoyl-pentapeptide-transferase from Clostridium kluyveri (strain NBRC 12016).